The sequence spans 48 residues: Protein TUNAR (48 aa).

A disordered region spans residues 1–20 (MVITSENDEDRGGQEKESKE). Over residues 10-20 (DRGGQEKESKE) the composition is skewed to basic and acidic residues. Residues 24-44 (LAMLGIIGTILNLIVIIFVYI) traverse the membrane as a helical segment.

In terms of assembly, interacts with ATPase ATP2A2/SERCA2. Interacts with ATPase ATP2A3/SERCA3; the interaction occurs at low levels in low glucose conditions and is increased by high glucose levels. In terms of tissue distribution, highly expressed in pancreatic islets where it is enriched in the insulin-producing beta cells.

It is found in the endoplasmic reticulum membrane. Its subcellular location is the extracellular vesicle membrane. Functionally, in neurons, plays a role in the regulation of intracellular Ca(2+), possibly by acting as an activator of ATP2A2/SERCA2, thus increasing the efficiency with which Ca(2+) is removed from the cytoplasm. Inhibits differentiation of embryonic stem cells into neurons and inhibits neurite outgrowth, likely as a result of its role in intracellular Ca(2+) regulation. In pancreatic beta cells, lowers Ca(2+) levels in the endoplasmic reticulum and enhances glucose-stimulated insulin secretion. The protein is Protein TUNAR of Homo sapiens (Human).